Consider the following 777-residue polypeptide: Reticulon-1 (777 aa).

4 disordered regions span residues Met-1–Ser-77, Asn-129–Asp-182, Thr-198–Gly-245, and Ala-293–Pro-573. Residues Ser-13 and Ser-68 each carry the phosphoserine modification. The segment covering Arg-199 to Gly-233 has biased composition (basic and acidic residues). Phosphoserine occurs at positions 210, 241, and 325. Positions Pro-326–Ser-339 are enriched in low complexity. Phosphoserine is present on residues Ser-348 and Ser-350. Over residues Ile-393–Ser-406 the composition is skewed to polar residues. Ser-485 carries the phosphoserine modification. A compositionally biased stretch (basic and acidic residues) spans Ala-495–Pro-510. The span at Thr-525 to Glu-534 shows a compositional bias: polar residues. In terms of domain architecture, Reticulon spans Ala-590 to Glu-777. A run of 2 helical transmembrane segments spans residues Ile-604 to Val-624 and Phe-706 to Leu-726.

As to quaternary structure, interacts with NDRG1. Interacts with BACE1. Interacts with TMEM33. Interacts with UGCG; regulates the ceramide glucosyltransferase activity of UGCG. Expressed predominantly in central and peripheral nervous system of newborn and adult rats. Low levels have been also detected in heart, adrenal gland and spleen. Expression of isoform RTN1-B is restricted to particular neuronal types.

The protein resides in the endoplasmic reticulum membrane. It localises to the golgi apparatus membrane. Its function is as follows. Inhibits amyloid precursor protein processing, probably by blocking BACE1 activity. The protein is Reticulon-1 (Rtn1) of Rattus norvegicus (Rat).